A 294-amino-acid chain; its full sequence is Putative lipid kinase SP_1045 (294 aa).

One can recognise a DAGKc domain in the interval 1–131 (MKKAMVIINP…IDIGKANDNY (131 aa)). ATP-binding positions include 9–13 (NPTSG), threonine 40, 66–72 (GDGTVNE), and threonine 93. Residues aspartate 212 and tyrosine 214 each contribute to the Mg(2+) site. Catalysis depends on aspartate 269, which acts as the Proton acceptor.

This sequence belongs to the diacylglycerol/lipid kinase family. Mg(2+) serves as cofactor.

Its function is as follows. May catalyze the ATP-dependent phosphorylation of lipids other than diacylglycerol (DAG). In fact, is not able to exhibit diacylglycerol kinase activity in vitro. The sequence is that of Putative lipid kinase SP_1045 from Streptococcus pneumoniae serotype 4 (strain ATCC BAA-334 / TIGR4).